The primary structure comprises 468 residues: Trehalose-2-sulfate acyltransferase PapA2 (468 aa).

Belongs to the PapA acyltransferase family.

It catalyses the reaction 2-O-sulfo-alpha,alpha-trehalose + hexadecanoyl-CoA = 2-O-sulfo-2'-O-hexadecanoyl-alpha,alpha-trehalose + CoA. Its function is as follows. Required for the biosynthesis of sulfolipid-1 (SL-1), a major mycobacterial cell wall lipid. Catalyzes the acylation of trehalose-2-sulfate by adding the palmitoyl group at the 2'-position to yield the intermediate trehalose-2-sulfate-2'-palmitate (SL659). This is Trehalose-2-sulfate acyltransferase PapA2 (papA2) from Mycobacterium bovis (strain ATCC BAA-935 / AF2122/97).